The chain runs to 398 residues: Histidinol dehydrogenase (398 aa).

Residues Tyr-114, Gln-176, and Asn-199 each coordinate NAD(+). The substrate site is built by Thr-222, Gln-244, and His-247. Zn(2+) is bound by residues Gln-244 and His-247. Active-site proton acceptor residues include Glu-298 and His-299. His-299, Asp-331, Glu-384, and His-389 together coordinate substrate. Asp-331 contacts Zn(2+). His-389 contributes to the Zn(2+) binding site.

This sequence belongs to the histidinol dehydrogenase family. It depends on Zn(2+) as a cofactor.

The enzyme catalyses L-histidinol + 2 NAD(+) + H2O = L-histidine + 2 NADH + 3 H(+). Its pathway is amino-acid biosynthesis; L-histidine biosynthesis; L-histidine from 5-phospho-alpha-D-ribose 1-diphosphate: step 9/9. In terms of biological role, catalyzes the sequential NAD-dependent oxidations of L-histidinol to L-histidinaldehyde and then to L-histidine. The polypeptide is Histidinol dehydrogenase (hisD) (Saccharolobus solfataricus (strain ATCC 35092 / DSM 1617 / JCM 11322 / P2) (Sulfolobus solfataricus)).